A 141-amino-acid chain; its full sequence is ATP synthase epsilon chain (141 aa).

Belongs to the ATPase epsilon chain family. In terms of assembly, F-type ATPases have 2 components, CF(1) - the catalytic core - and CF(0) - the membrane proton channel. CF(1) has five subunits: alpha(3), beta(3), gamma(1), delta(1), epsilon(1). CF(0) has three main subunits: a, b and c.

It localises to the cell inner membrane. Produces ATP from ADP in the presence of a proton gradient across the membrane. The chain is ATP synthase epsilon chain from Burkholderia thailandensis (strain ATCC 700388 / DSM 13276 / CCUG 48851 / CIP 106301 / E264).